Consider the following 656-residue polypeptide: Hemocyanin subunit A (656 aa).

An N-terminal signal peptide occupies residues 1–18 (MWSLALATLFVLGTVIRA). Positions 197, 201, and 227 each coordinate Cu cation. Residue N313 is glycosylated (N-linked (GlcNAc...) asparagine). Residues H348, H352, and H388 each contribute to the Cu cation site. C558 and C606 are joined by a disulfide.

It belongs to the tyrosinase family. Hemocyanin subfamily. As to quaternary structure, 36-chain polymer consisting of 6 hexamers, each of which includes 4 different chains, A, B, C and D. Hemolymph.

The protein localises to the secreted. It is found in the extracellular space. In terms of biological role, hemocyanins are copper-containing oxygen carriers occurring freely dissolved in the hemolymph of many mollusks and arthropods. The chain is Hemocyanin subunit A (HCA) from Scutigera coleoptrata (House centipede).